The chain runs to 897 residues: High molecular weight rhoptry protein 3 (897 aa).

An N-terminal signal peptide occupies residues 1–24 (MRSKHLVTLFIITFLSFSTVKVWG). 5 disulfide bridges follow: Cys157–Cys231, Cys244–Cys253, Cys262–Cys276, Cys421–Cys620, and Cys475–Cys536. The helical transmembrane segment at 597–615 (FVLYFISIISVLYINEYYY) threads the bilayer. 2 disordered regions span residues 788-845 (KEQS…SNLK) and 859-897 (QLDK…ENEL). Polar residues predominate over residues 792–801 (KSTSAASTSD). Positions 802-817 (EISGSEGPSTESTSTG) are enriched in low complexity. The residue at position 804 (Ser804) is a Phosphoserine; by CDPK1. Over residues 820 to 832 (GEDKTTDNTYKEM) the composition is skewed to basic and acidic residues. Over residues 865 to 876 (PKKKKSKRKKKR) the composition is skewed to basic residues. Basic and acidic residues predominate over residues 877–889 (DSSSDRILLEESK).

In terms of assembly, component of the RhopH complex. RhopH complex is composed of CLAG3.1/CLAG3.2, RhopH2 and RhopH3 with a 1:1:1 subunit stoichiometry. Interacts with CLAG3.1/CLAG3.2. Interacts with CDPK1; the interaction promotes RhopH3 phosphorylation in merozoites. Proteolytically cleaved near C-terminus.

The protein localises to the host cell membrane. The protein resides in the parasitophorous vacuole membrane. It is found in the cytoplasm. Its subcellular location is the cytoplasmic vesicle. It localises to the secretory vesicle. The protein localises to the rhoptry. Its function is as follows. Participates in the formation of new permeability pathways in Plasmodium-infected erythrocytes enabling the uptake of nutrients from the blood plasma. Required for maintaining invasion capacity of merozoites. Required for the trophozoite to schizont developmental transition of the intracellular parasite. The sequence is that of High molecular weight rhoptry protein 3 from Plasmodium falciparum (isolate 3D7).